A 422-amino-acid polypeptide reads, in one-letter code: Glycine amidinotransferase, mitochondrial (422 aa).

A mitochondrion-targeting transit peptide spans 1–37 (MLRVRCLRGGSRGAEAVHYIGSMLRKSFVGWVQRSFQ). Active-site residues include Asp253 and His302. Cys406 (amidino-cysteine intermediate) is an active-site residue.

This sequence belongs to the amidinotransferase family. Homodimer. In terms of tissue distribution, ubiquitously expressed in adult tissues, with highest levels in muscle and intermediate levels in eye, heart, liver, stomach and testis. In stage 28 embryos, expression is higher in the dorsal and ventral parts of the trunk than in the head. In middle gastrulae, expression is highest around the yolk plug, while in stage 15 and tailbud stage embryos, expression is largely restricted to the region around the presumptive notochord and gut.

Its subcellular location is the mitochondrion inner membrane. It carries out the reaction L-arginine + glycine = guanidinoacetate + L-ornithine. It functions in the pathway amine and polyamine biosynthesis; creatine biosynthesis; creatine from L-arginine and glycine: step 1/2. Functionally, catalyzes the biosynthesis of guanidinoacetate, the immediate precursor of creatine. Creatine plays a vital role in energy metabolism in muscle tissues. May play a role in embryonic and central nervous system development. The sequence is that of Glycine amidinotransferase, mitochondrial from Xenopus laevis (African clawed frog).